The sequence spans 216 residues: Probable phosphatase SPAC513.02 (216 aa).

His15 acts as the Tele-phosphohistidine intermediate in catalysis.

Belongs to the phosphoglycerate mutase family. BPG-dependent PGAM subfamily.

The protein resides in the cytoplasm. Its subcellular location is the nucleus. This Schizosaccharomyces pombe (strain 972 / ATCC 24843) (Fission yeast) protein is Probable phosphatase SPAC513.02.